Reading from the N-terminus, the 329-residue chain is Probable acyltransferase FabY (329 aa).

The N-acetyltransferase domain occupies 18-162; the sequence is YHLRVPQTEE…RHFLMIKPVA (145 aa).

It belongs to the acetyltransferase family. FabY subfamily.

The protein operates within lipid metabolism; fatty acid biosynthesis. Supports initiation of fatty acid biosynthesis in the absence of FabH. This chain is Probable acyltransferase FabY, found in Escherichia coli O157:H7.